Consider the following 308-residue polypeptide: Elongation factor Ts (308 aa).

The tract at residues 80–83 (TDFV) is involved in Mg(2+) ion dislocation from EF-Tu.

Belongs to the EF-Ts family.

It is found in the cytoplasm. Functionally, associates with the EF-Tu.GDP complex and induces the exchange of GDP to GTP. It remains bound to the aminoacyl-tRNA.EF-Tu.GTP complex up to the GTP hydrolysis stage on the ribosome. The protein is Elongation factor Ts of Parvibaculum lavamentivorans (strain DS-1 / DSM 13023 / NCIMB 13966).